A 238-amino-acid polypeptide reads, in one-letter code: Histidine/lysine/arginine/ornithine transport system permease protein HisM (238 aa).

At Met-1–Thr-26 the chain is on the periplasmic side. The 199-residue stretch at Val-23 to Phe-221 folds into the ABC transmembrane type-1 domain. A helical transmembrane segment spans residues Leu-27–Gly-47. Topologically, residues Arg-48–Pro-58 are cytoplasmic. Residues Ile-59–Tyr-79 form a helical membrane-spanning segment. Over Ser-80–Cys-104 the chain is Periplasmic. Residues Thr-105 to Ile-125 form a helical membrane-spanning segment. The Cytoplasmic segment spans residues Arg-126 to Arg-157. The helical transmembrane segment at Ile-158 to Phe-178 threads the bilayer. Topologically, residues Thr-179–Pro-199 are periplasmic. Residues Phe-200 to Leu-220 form a helical membrane-spanning segment. The Cytoplasmic portion of the chain corresponds to Phe-221 to His-238.

It belongs to the binding-protein-dependent transport system permease family. HisMQ subfamily. As to quaternary structure, the HisPMQJ complex is composed of two ATP-binding proteins (HisP), two transmembrane proteins (HisM and HisQ) and a solute-binding protein (HisJ). The HisPMQ-ArgT complex is composed of two ATP-binding proteins (HisP), two transmembrane proteins (HisM and HisQ) and a solute-binding protein (ArgT).

The protein localises to the cell inner membrane. Functionally, part of the ABC transporter complex HisPMQJ involved in histidine transport. Is also part of the ABC transporter complex HisPMQ-ArgT involved in lysine/arginine/ornithine transport. Probably responsible for the translocation of the substrate across the membrane. This is Histidine/lysine/arginine/ornithine transport system permease protein HisM (hisM) from Escherichia coli O157:H7.